The chain runs to 508 residues: UDP-N-acetylmuramoylalanine--D-glutamate ligase (508 aa).

ATP is bound at residue 138-144 (GTNGKTT). The interval 294 to 314 (FDEPAPRRKKDAPPPTRAGGR) is disordered.

Belongs to the MurCDEF family.

It localises to the cytoplasm. The catalysed reaction is UDP-N-acetyl-alpha-D-muramoyl-L-alanine + D-glutamate + ATP = UDP-N-acetyl-alpha-D-muramoyl-L-alanyl-D-glutamate + ADP + phosphate + H(+). Its pathway is cell wall biogenesis; peptidoglycan biosynthesis. Cell wall formation. Catalyzes the addition of glutamate to the nucleotide precursor UDP-N-acetylmuramoyl-L-alanine (UMA). This is UDP-N-acetylmuramoylalanine--D-glutamate ligase from Bordetella parapertussis (strain 12822 / ATCC BAA-587 / NCTC 13253).